The sequence spans 490 residues: Pup--protein ligase (490 aa).

Residue Glu9 coordinates Mg(2+). Arg53 is a binding site for ATP. Tyr55 lines the Mg(2+) pocket. The active-site Proton acceptor is Asp57. Glu63 provides a ligand contact to Mg(2+). Residue Ser66 participates in ATP binding. The segment at 160–181 (KTHPNGGPVPGSTDPASSTGVP) is disordered. Trp441 is a binding site for ATP.

Belongs to the Pup ligase/Pup deamidase family. Pup-conjugating enzyme subfamily.

It carries out the reaction ATP + [prokaryotic ubiquitin-like protein]-L-glutamate + [protein]-L-lysine = ADP + phosphate + N(6)-([prokaryotic ubiquitin-like protein]-gamma-L-glutamyl)-[protein]-L-lysine.. The protein operates within protein degradation; proteasomal Pup-dependent pathway. Its pathway is protein modification; protein pupylation. Its function is as follows. Catalyzes the covalent attachment of the prokaryotic ubiquitin-like protein modifier Pup to the proteasomal substrate proteins, thereby targeting them for proteasomal degradation. This tagging system is termed pupylation. The ligation reaction involves the side-chain carboxylate of the C-terminal glutamate of Pup and the side-chain amino group of a substrate lysine. This is Pup--protein ligase from Rothia mucilaginosa (strain DY-18) (Stomatococcus mucilaginosus).